Reading from the N-terminus, the 146-residue chain is CysO-cysteine peptidase (146 aa).

Residues leucine 11 to alanine 134 form the MPN domain. Residues histidine 88, histidine 90, and aspartate 101 each contribute to the Zn(2+) site. The JAMM motif signature appears at histidine 88–aspartate 101.

This sequence belongs to the peptidase M67A family. The cofactor is Zn(2+).

It carries out the reaction [CysO sulfur-carrier protein]-Gly-NH-CH2-C(O)-S-L-Cys + H2O = [CysO sulfur-carrier protein]-C-terminal Gly-Gly + L-cysteine + H(+). The protein operates within amino-acid biosynthesis; L-cysteine biosynthesis. Protease that hydrolyzes the covalent CysO-cysteine adduct synthesized by CysM to release L-cysteine and regenerate CysO. This Mycobacterium bovis (strain ATCC BAA-935 / AF2122/97) protein is CysO-cysteine peptidase (mec).